The primary structure comprises 178 residues: Peptide deformylase (178 aa).

Fe cation contacts are provided by Cys-102 and His-144. Residue Glu-145 is part of the active site. His-148 lines the Fe cation pocket.

Belongs to the polypeptide deformylase family. Requires Fe(2+) as cofactor.

The catalysed reaction is N-terminal N-formyl-L-methionyl-[peptide] + H2O = N-terminal L-methionyl-[peptide] + formate. Its function is as follows. Removes the formyl group from the N-terminal Met of newly synthesized proteins. Requires at least a dipeptide for an efficient rate of reaction. N-terminal L-methionine is a prerequisite for activity but the enzyme has broad specificity at other positions. In Leptospira interrogans serogroup Icterohaemorrhagiae serovar copenhageni (strain Fiocruz L1-130), this protein is Peptide deformylase.